The chain runs to 228 residues: Uracil-DNA glycosylase (228 aa).

D64 serves as the catalytic Proton acceptor.

It belongs to the uracil-DNA glycosylase (UDG) superfamily. UNG family.

The protein resides in the cytoplasm. It catalyses the reaction Hydrolyzes single-stranded DNA or mismatched double-stranded DNA and polynucleotides, releasing free uracil.. Its function is as follows. Excises uracil residues from the DNA which can arise as a result of misincorporation of dUMP residues by DNA polymerase or due to deamination of cytosine. In Yersinia pestis bv. Antiqua (strain Antiqua), this protein is Uracil-DNA glycosylase.